We begin with the raw amino-acid sequence, 222 residues long: Tegument protein UL26 (222 aa).

This sequence belongs to the herpesviridae US22 family. As to quaternary structure, interacts with UL25. Interacts with ISGylation machinery components ISG15, UBA7 and HERC5; these interactions inhibit global protein ISGylation. ISGylated; ISGylation regulates UL26 stability and inhibits its activities to suppress NF-kappa-B signaling.

It is found in the virion tegument. Its subcellular location is the host nucleus. In terms of biological role, plays a role in the inhibition of host NF-kappa-B. This inhibition affects both the canonical and the non-canonical pathways. Blocks the induction of host IKK phosphorylation. May also influence the normal phosphorylation state of several tegument proteins including pp28 in virions. Also suppresses virus-induced ISGylation independent of its own ISGylation. The sequence is that of Tegument protein UL26 (UL26) from Homo sapiens (Human).